The sequence spans 89 residues: Small ribosomal subunit protein uS15 (89 aa).

Belongs to the universal ribosomal protein uS15 family. In terms of assembly, part of the 30S ribosomal subunit. Forms a bridge to the 50S subunit in the 70S ribosome, contacting the 23S rRNA.

In terms of biological role, one of the primary rRNA binding proteins, it binds directly to 16S rRNA where it helps nucleate assembly of the platform of the 30S subunit by binding and bridging several RNA helices of the 16S rRNA. Functionally, forms an intersubunit bridge (bridge B4) with the 23S rRNA of the 50S subunit in the ribosome. In Granulibacter bethesdensis (strain ATCC BAA-1260 / CGDNIH1), this protein is Small ribosomal subunit protein uS15.